Reading from the N-terminus, the 228-residue chain is MAFLSPLPPPPENEQQLFERAQQLAGCSLGELAEGARLAIPRDLKRDKGWVGMLLEQYLGAMAGSKPEQDFPELGIELKTIPIDAAGKPLETTFVCVAPLTGNSGVTWASSHVRHKLARVLWIPVEGERQIPLAQRRIGSPLLWSPNAEEEEMLRRDWEELMDLIVLGHVERITARHGEVLQLRPKAANSKALTEAIGEQGQPILTLPRGFYLKKSFTGALLARHFFV.

Belongs to the MutH family.

The protein localises to the cytoplasm. Functionally, sequence-specific endonuclease that cleaves unmethylated GATC sequences. It is involved in DNA mismatch repair. This chain is DNA mismatch repair protein MutH, found in Serratia proteamaculans (strain 568).